A 715-amino-acid chain; its full sequence is MHEQRAKPSAFQLTIRPDNIGVITIDVPGEKVNTLKAEFVEQVNDVLIRAQQHPALEGLVIVSGKPDSFIAGADITMIAACTTAKEAETLAKKGQSTLAQIAAFQVPVVAAIHGACLGGGLELALACHGRVCSLDDKTALGLPEVQLGLLPGSGGTQRLPRLIGASKALDMILTGKHIRARQALRLGLVDDAVPQSILLQTAIERVKQGWQSRRELPWQERLLNGPLGKSLLFSIVRKKTLAKTHGNYPAAERIIQVVRTGLDSGIASGYEAEARAFGELAMTPQSAALRSLFFASTALKKERGGNAQPHALHRIGILGGGLMGGGIACVTATRGGLPVRIKDVNETGINHALKYSWDVLSKRVRSKRMRPAERQKQMMLISGSTDYSGFDQVDVVIEAVFEDLSLKQQMVAEIEQHAAPHTIFASNTSSLPIGQIAAKAQRPEQVIGLHYFSPVDKMPLVEVIPHATTSEETIATTVALAHKQGKTAIVVADRAGFYVNRILAPYINEAARCLLEGEPIESLDKALVDFGFPVGPITLLDEVGIDVGTKISPVLVEQLGPRFAAPAAFDAVLKDGRKGRKNGRGFYLYPSEGQQRQRHKRADTSVYILLGITPKSHLQQAVIAQRCVMMMLNEAARCLDEGVIRSARDGDIGAVFGIGFPPFLGGPFRYMDQLGVEKVVKTLEYLQRQHGEYFAPCERLQRMAQQGERFYPQGS.

The enoyl-CoA hydratase stretch occupies residues 1–194 (MHEQRAKPSA…RLGLVDDAVP (194 aa)). The tract at residues 310-715 (HALHRIGILG…QGERFYPQGS (406 aa)) is 3-hydroxyacyl-CoA dehydrogenase.

The protein in the N-terminal section; belongs to the enoyl-CoA hydratase/isomerase family. It in the central section; belongs to the 3-hydroxyacyl-CoA dehydrogenase family. Heterotetramer of two alpha chains (FadJ) and two beta chains (FadI).

The protein localises to the cytoplasm. It catalyses the reaction a (3S)-3-hydroxyacyl-CoA = a (2E)-enoyl-CoA + H2O. The catalysed reaction is a 4-saturated-(3S)-3-hydroxyacyl-CoA = a (3E)-enoyl-CoA + H2O. It carries out the reaction a (3S)-3-hydroxyacyl-CoA + NAD(+) = a 3-oxoacyl-CoA + NADH + H(+). The enzyme catalyses (3S)-3-hydroxybutanoyl-CoA = (3R)-3-hydroxybutanoyl-CoA. Its pathway is lipid metabolism; fatty acid beta-oxidation. Functionally, catalyzes the formation of a hydroxyacyl-CoA by addition of water on enoyl-CoA. Also exhibits 3-hydroxyacyl-CoA epimerase and 3-hydroxyacyl-CoA dehydrogenase activities. This chain is Fatty acid oxidation complex subunit alpha, found in Serratia proteamaculans (strain 568).